Consider the following 325-residue polypeptide: Beta-ketoacyl-[acyl-carrier-protein] synthase III (325 aa).

Catalysis depends on residues cysteine 112 and histidine 250. An ACP-binding region spans residues 251 to 255 (QANIR). Residue asparagine 280 is part of the active site.

This sequence belongs to the thiolase-like superfamily. FabH family. Homodimer.

Its subcellular location is the cytoplasm. The catalysed reaction is malonyl-[ACP] + acetyl-CoA + H(+) = 3-oxobutanoyl-[ACP] + CO2 + CoA. The protein operates within lipid metabolism; fatty acid biosynthesis. Catalyzes the condensation reaction of fatty acid synthesis by the addition to an acyl acceptor of two carbons from malonyl-ACP. Catalyzes the first condensation reaction which initiates fatty acid synthesis and may therefore play a role in governing the total rate of fatty acid production. Possesses both acetoacetyl-ACP synthase and acetyl transacylase activities. Its substrate specificity determines the biosynthesis of branched-chain and/or straight-chain of fatty acids. In Streptococcus mutans serotype c (strain ATCC 700610 / UA159), this protein is Beta-ketoacyl-[acyl-carrier-protein] synthase III.